We begin with the raw amino-acid sequence, 440 residues long: Ran-specific GTPase-activating protein 30 (440 aa).

One can recognise a RanBD1 domain in the interval 1–314 (MDEILAKAGS…LVLKIDRSDD (314 aa)). The residue at position 272 (Thr-272) is a Phosphothreonine. Residues 341 to 371 (IEEDEEEDEEEDEEEGKDGEERKEEEEEENK) are compositionally biased toward acidic residues. Residues 341 to 375 (IEEDEEEDEEEDEEEGKDGEERKEEEEEENKLEDK) are disordered.

In terms of assembly, interacts with GSP1.

The protein localises to the cytoplasm. It is found in the nucleus. In terms of biological role, important for the export of protein containing nuclear export signal (NES) out of the nucleus. Stimulates the GTPase activity of GSP1. This is Ran-specific GTPase-activating protein 30 (YRB30) from Saccharomyces cerevisiae (strain ATCC 204508 / S288c) (Baker's yeast).